Consider the following 1091-residue polypeptide: ATP-dependent RNA helicase ddx54 (1091 aa).

Disordered stretches follow at residues 1-63 (MVKP…KEEF) and 150-231 (DNSN…KTGG). Residues 26–35 (MKGKKLETKS) show a composition bias toward basic and acidic residues. Positions 150 to 161 (DNSNFDNNGDQF) are enriched in polar residues. Positions 196-207 (KKEEIESSEKFE) are enriched in basic and acidic residues. Positions 230 to 258 (GGFQSMDLTKNLLKAILKKGFNVPTPIQR) match the Q motif motif. The region spanning 261–433 (IPMILDGHDI…RAGLNNPKLI (173 aa)) is the Helicase ATP-binding domain. 274 to 281 (ARTGSGKT) is an ATP binding site. The DEAD box motif lies at 381–384 (DEAD). Residues 478–632 (TETTTTTTTN…KFQYEGQTIN (155 aa)) form the Helicase C-terminal domain. 2 disordered regions span residues 801–896 (EEML…TPEN) and 933–1091 (KRKG…KSRK). A compositionally biased stretch (basic and acidic residues) spans 814 to 823 (DNNKDIKMNE). The span at 824 to 855 (NDDENDDDDEEGENDDDEEEENEKDEDDEEDE) shows a compositional bias: acidic residues. 3 stretches are compositionally biased toward basic and acidic residues: residues 865–874 (ESSDKNDNNK), 944–975 (DADRKNSKKLVRNEAGKLVEAKKSHKGYEEWK), and 1008–1019 (QGREKEKKDNKA). Basic residues predominate over residues 1020 to 1029 (SHAKGSHGLK). A compositionally biased stretch (basic and acidic residues) spans 1031-1052 (RPSELKDKNQISKNRSEKERKM). Residues 1068 to 1079 (SGGGGGGKGSKF) are compositionally biased toward gly residues.

The protein belongs to the DEAD box helicase family. DDX54/DBP10 subfamily.

The protein resides in the nucleus. The protein localises to the nucleolus. The catalysed reaction is ATP + H2O = ADP + phosphate + H(+). ATP-binding RNA helicase which may be involved in the ribosome biogenesis. This chain is ATP-dependent RNA helicase ddx54 (helA), found in Dictyostelium discoideum (Social amoeba).